The sequence spans 145 residues: Ubiquitin-conjugating enzyme E2 variant 1C (145 aa).

Positions 12–145 constitute a UBC core domain; sequence PRNFRLLEEL…LVQPPEGTFF (134 aa).

This sequence belongs to the ubiquitin-conjugating enzyme family. As to quaternary structure, heterodimer with UBC35 or UBC36. Expressed in roots, shoots, leaves, stems and flowers, but not in pollen.

Functionally, has no ubiquitin ligase activity on its own. The heterodimer with UBC catalyzes the synthesis of non-canonical poly-ubiquitin chains that are linked through 'Lys-63'. This type of poly-ubiquitination does not lead to protein degradation by the proteasome. Mediates transcriptional activation of target genes. May play a role in the control of progress through the cell cycle and differentiation. May play a role in the error-free DNA repair pathway and contributes to the survival of cells after DNA damage. The polypeptide is Ubiquitin-conjugating enzyme E2 variant 1C (UEV1C) (Arabidopsis thaliana (Mouse-ear cress)).